The chain runs to 265 residues: Adenosylcobinamide-GDP ribazoletransferase (265 aa).

5 helical membrane passes run L59 to I79, I113 to V133, W141 to L161, L183 to L203, and F206 to Y226.

The protein belongs to the CobS family. Mg(2+) is required as a cofactor.

It localises to the cell inner membrane. The catalysed reaction is alpha-ribazole + adenosylcob(III)inamide-GDP = adenosylcob(III)alamin + GMP + H(+). The enzyme catalyses alpha-ribazole 5'-phosphate + adenosylcob(III)inamide-GDP = adenosylcob(III)alamin 5'-phosphate + GMP + H(+). Its pathway is cofactor biosynthesis; adenosylcobalamin biosynthesis; adenosylcobalamin from cob(II)yrinate a,c-diamide: step 7/7. Functionally, joins adenosylcobinamide-GDP and alpha-ribazole to generate adenosylcobalamin (Ado-cobalamin). Also synthesizes adenosylcobalamin 5'-phosphate from adenosylcobinamide-GDP and alpha-ribazole 5'-phosphate. The sequence is that of Adenosylcobinamide-GDP ribazoletransferase from Leptospira interrogans serogroup Icterohaemorrhagiae serovar copenhageni (strain Fiocruz L1-130).